We begin with the raw amino-acid sequence, 465 residues long: 3-isopropylmalate dehydratase large subunit (465 aa).

[4Fe-4S] cluster-binding residues include C347, C407, and C410.

Belongs to the aconitase/IPM isomerase family. LeuC type 1 subfamily. In terms of assembly, heterodimer of LeuC and LeuD. The cofactor is [4Fe-4S] cluster.

It carries out the reaction (2R,3S)-3-isopropylmalate = (2S)-2-isopropylmalate. It functions in the pathway amino-acid biosynthesis; L-leucine biosynthesis; L-leucine from 3-methyl-2-oxobutanoate: step 2/4. Its function is as follows. Catalyzes the isomerization between 2-isopropylmalate and 3-isopropylmalate, via the formation of 2-isopropylmaleate. In Tolumonas auensis (strain DSM 9187 / NBRC 110442 / TA 4), this protein is 3-isopropylmalate dehydratase large subunit.